The sequence spans 1331 residues: Alpha,alpha-trehalose-phosphate synthase [UDP-forming] 1 (1331 aa).

The segment covering 1-13 has biased composition (polar residues); that stretch reads MTDTATGVHSNAN. Disordered regions lie at residues 1 to 50, 71 to 118, and 1312 to 1331; these read MTDT…DNDP, TGKE…SGQL, and PMDQ…SFGN. Residues 39–50 show a composition bias toward basic and acidic residues; the sequence is DPFDRPKNDNDP. The segment covering 77 to 98 has biased composition (acidic residues); that stretch reads LDESDDMTENEDHDEMANEDDG. Over residues 102-112 the composition is skewed to basic and acidic residues; it reads NEKKVETRKMD. Residues 1318-1331 are compositionally biased toward polar residues; that stretch reads SSTLGASLGTSFGN.

It in the N-terminal section; belongs to the glycosyltransferase 20 family. The protein in the C-terminal section; belongs to the gob-1 trehalose phosphatase family.

The enzyme catalyses D-glucose 6-phosphate + UDP-alpha-D-glucose = alpha,alpha-trehalose 6-phosphate + UDP + H(+). Its function is as follows. Catalyzes the production of trehalose from glucose-6-phosphate and UDP-alpha-D-glucose in a 2 step process. In Caenorhabditis elegans, this protein is Alpha,alpha-trehalose-phosphate synthase [UDP-forming] 1 (tps-1).